An 80-amino-acid polypeptide reads, in one-letter code: Exodeoxyribonuclease 7 small subunit (80 aa).

Belongs to the XseB family. Heterooligomer composed of large and small subunits.

The protein resides in the cytoplasm. The enzyme catalyses Exonucleolytic cleavage in either 5'- to 3'- or 3'- to 5'-direction to yield nucleoside 5'-phosphates.. Its function is as follows. Bidirectionally degrades single-stranded DNA into large acid-insoluble oligonucleotides, which are then degraded further into small acid-soluble oligonucleotides. This is Exodeoxyribonuclease 7 small subunit from Photobacterium profundum (strain SS9).